We begin with the raw amino-acid sequence, 277 residues long: MNPYLNAFLRSIIEAITEFLPVSSTGHLFLFSSFFPFYGENVEFDDLFDIFIQSGAILSVLFLYREKFKSQIVSSFRYILKQNSDSEGFHFLIQICIGAFPILIAGFIAKKFLDTIKARPDLLEILSGAWIFGGVLILVAEWYFHQRPEEKKSIGFKDSILIGIFQCMALIPGMSRSAATIITARFLGKDTKSSAEFSFFLAVPVLLAAGIYKLIKYRSILNGNTIPVLMFGFLVSFLLCTLVIRWFLRYIQKHSFSVFGVYRILLGVGVLVLTKLI.

The next 8 membrane-spanning stretches (helical) occupy residues 19–39, 44–64, 89–109, 122–142, 154–174, 195–215, 224–244, and 257–277; these read FLPV…PFYG, FDDL…LFLY, FHFL…GFIA, LLEI…VAEW, IGFK…IPGM, AEFS…YKLI, NTIP…TLVI, and SVFG…TKLI.

This sequence belongs to the UppP family.

The protein localises to the cell inner membrane. The catalysed reaction is di-trans,octa-cis-undecaprenyl diphosphate + H2O = di-trans,octa-cis-undecaprenyl phosphate + phosphate + H(+). Functionally, catalyzes the dephosphorylation of undecaprenyl diphosphate (UPP). Confers resistance to bacitracin. The chain is Undecaprenyl-diphosphatase from Leptospira interrogans serogroup Icterohaemorrhagiae serovar copenhageni (strain Fiocruz L1-130).